Here is a 302-residue protein sequence, read N- to C-terminus: DNA-binding transcriptional activator HetR (302 aa).

Ser153 is an active-site residue.

Belongs to the peptidase S48 family. In terms of assembly, homodimer; disulfide-linked.

Might be involved in temporal and/or spatial regulation of nitrogen fixation. Dimerization is required for DNA-binding. Has both a protease and a DNA-binding activity. The sequence is that of DNA-binding transcriptional activator HetR from Trichodesmium erythraeum (strain IMS101).